The primary structure comprises 99 residues: MDLIGFGYAALVTFGSILGYKRRGGVLSLIAGLFVGFLAGYGAYRVSNDKRDVKLSLFTAFFLATIMGVRFKRSKKIMPAGLVAGLSLLMILRLVLLLL.

3 helical membrane passes run 1–21, 24–44, and 79–99; these read MDLIGFGYAALVTFGSILGYK, GGVLSLIAGLFVGFLAGYGAY, and PAGLVAGLSLLMILRLVLLLL.

The protein belongs to the TMEM14 family.

It is found in the mitochondrion membrane. The protein resides in the endoplasmic reticulum membrane. Inhibits apoptosis via negative regulation of the mitochondrial outer membrane permeabilization involved in apoptotic signaling pathway. This chain is Transmembrane protein 14A (TMEM14A), found in Bos taurus (Bovine).